Consider the following 74-residue polypeptide: Sec-independent protein translocase protein TatA (74 aa).

A helical membrane pass occupies residues 1 to 21 (MGSIGMTELLLIFGIIVLLFG).

The protein belongs to the TatA/E family. As to quaternary structure, forms a complex with TatC.

It localises to the cell inner membrane. Part of the twin-arginine translocation (Tat) system that transports large folded proteins containing a characteristic twin-arginine motif in their signal peptide across membranes. TatA could form the protein-conducting channel of the Tat system. The protein is Sec-independent protein translocase protein TatA of Sulfurihydrogenibium sp. (strain YO3AOP1).